A 273-amino-acid polypeptide reads, in one-letter code: Diaminopimelate epimerase (273 aa).

The substrate site is built by N11 and N60. Residue C69 is the Proton donor of the active site. Substrate contacts are provided by residues 70–71, N181, and 199–200; these read GN and ER. The Proton acceptor role is filled by C209. Residue 210 to 211 coordinates substrate; sequence GT.

The protein belongs to the diaminopimelate epimerase family. In terms of assembly, homodimer.

It is found in the cytoplasm. It carries out the reaction (2S,6S)-2,6-diaminopimelate = meso-2,6-diaminopimelate. The protein operates within amino-acid biosynthesis; L-lysine biosynthesis via DAP pathway; DL-2,6-diaminopimelate from LL-2,6-diaminopimelate: step 1/1. Catalyzes the stereoinversion of LL-2,6-diaminopimelate (L,L-DAP) to meso-diaminopimelate (meso-DAP), a precursor of L-lysine and an essential component of the bacterial peptidoglycan. In Helicobacter pylori (strain Shi470), this protein is Diaminopimelate epimerase.